The primary structure comprises 507 residues: Cytochrome P450 monooxygenase ptmU (507 aa).

Residues valine 4–phenylalanine 24 form a helical membrane-spanning segment. Residues asparagine 98, asparagine 202, and asparagine 398 are each glycosylated (N-linked (GlcNAc...) asparagine). A heme-binding site is contributed by cysteine 444.

This sequence belongs to the cytochrome P450 family. Heme is required as a cofactor.

Its subcellular location is the membrane. Its pathway is secondary metabolite biosynthesis. Its function is as follows. Cytochrome P450 monooxygenase; part of the gene cluster that mediates the biosynthesis of the indole diterpenes penitrems. The geranylgeranyl diphosphate (GGPP) synthase ptmG catalyzes the first step in penitrem biosynthesis via conversion of farnesyl pyrophosphate and isopentyl pyrophosphate into geranylgeranyl pyrophosphate (GGPP). Condensation of indole-3-glycerol phosphate with GGPP by the prenyl transferase ptmC then forms 3-geranylgeranylindole (3-GGI). Epoxidation by the FAD-dependent monooxygenase ptmM leads to a epoxidized-GGI that is substrate of the terpene cyclase ptmB for cyclization to yield paspaline. Paspaline is subsequently converted to 13-desoxypaxilline by the cytochrome P450 monooxygenase ptmP, the latter being then converted to paxilline by the cytochrome P450 monooxygenase ptmQ. Paxilline is converted to beta-paxitriol via C-10 ketoreduction by the short-chain dehydrogenase ptmH which can be monoprenylated at the C-20 by the indole diterpene prenyltransferase ptmD. A two-step elimination (acetylation and elimination) process performed by the O-acetyltransferase ptmV and ptmI leads to the production of the prenylated form of penijanthine. The FAD-linked oxidoreductase ptmO then converts the prenylated form of penijanthine into PC-M5 which is in turn transformed into PC-M4 by the aromatic dimethylallyltransferase ptmE. Five sequential oxidative transformations performed by the cytochrome P450 monooxygenases ptmK, ptmU, ptmL, ptmN and ptmJ yield the various penitrem compounds. PtmK, ptmU and ptmM are involved in the formation of the key bicyclic ring of penitrem C via the formation of the intermediates secopenitrem D and penitrem D. PtmL catalyzes the epoxidation of penitrem D and C to yield penitrem B and F, respectively. PtmJ catalyzes the last benzylic hydroxylation to convert penitrem B to prenitrem E and penitrem F to penitrem A. In Penicillium ochrochloron, this protein is Cytochrome P450 monooxygenase ptmU.